The following is a 476-amino-acid chain: MSMGKVVQVIGPVVDVEFSLDTDLPDINNALTVDKGNDETVVLEVALELGDGVMRTISMESTDGLRRGMPVEDAGRAINVPVGKETLGRVFNVLGETIDGGEEFPADFRRDSIHRSAPKFEELNTSSEILETGIKVIDLLAPYVRGGKIGLFGGAGVGKTVLIQELIHNIAEEHGGISVFTGVGERTREGNDLYFEMKESGVLEKTAMVFGQMNESPGARMRVALTGLTIAEYFRDVEGQDVLLFIDNIFRFTQAGSEVSALLGRMPSAVGYQPTLATEMGQLQERITSTKKGSVTSIQAIYVPADDYTDPAPATTFAHLDATTNLDRKLTQQGIYPAVNPLESSSSALDPEIVGQEHYEVASEVQHVLQRYRELQDIISILGMDELSDDEKIIVARARRIQFFLSQNFHVAEAFTGQAGSYVPVKDTVSGFKAILAGDYDDVPEEAFRLVGNIDAALAKAKEMGYTQSEKAVDQD.

153–160 lines the ATP pocket; the sequence is GGAGVGKT.

Belongs to the ATPase alpha/beta chains family. F-type ATPases have 2 components, CF(1) - the catalytic core - and CF(0) - the membrane proton channel. CF(1) has five subunits: alpha(3), beta(3), gamma(1), delta(1), epsilon(1). CF(0) has three main subunits: a(1), b(2) and c(9-12). The alpha and beta chains form an alternating ring which encloses part of the gamma chain. CF(1) is attached to CF(0) by a central stalk formed by the gamma and epsilon chains, while a peripheral stalk is formed by the delta and b chains.

The protein resides in the cell membrane. It catalyses the reaction ATP + H2O + 4 H(+)(in) = ADP + phosphate + 5 H(+)(out). Its function is as follows. Produces ATP from ADP in the presence of a proton gradient across the membrane. The catalytic sites are hosted primarily by the beta subunits. In Latilactobacillus sakei subsp. sakei (strain 23K) (Lactobacillus sakei subsp. sakei), this protein is ATP synthase subunit beta.